The sequence spans 299 residues: DNA-binding transcriptional activator HetR (299 aa).

Residues 1–98 are DNA-binding domain; it reads MSNDIDLIKR…GKLLKTLGSQ (98 aa). DNA contacts are provided by residues 34 to 40 and 60 to 76; these read RHGAFLD and NLRM…KRVK. The segment at 99 to 216 is flap domain; sequence EPRYLIQFPY…FYALTRPFYA (118 aa). Ser-152 is an active-site residue. A DNA-binding site is contributed by 179-181; it reads SEA. The hood domain stretch occupies residues 217–299; the sequence is PADDQERTYI…LQMVFGRKED (83 aa).

Belongs to the peptidase S48 family. As to quaternary structure, upon expression in E.coli most protein is monomeric, although varying amounts of homodimer can be seen. Homodimer; disulfide-linked. Homodimer. Binds the 6 residue C-terminal peptide of PatS; one peptide binds to each subunit. In bacterial two-hybrid assays interacts robustly with itself, Alr2902 and Alr3234 and more weakly with Als1930. In terms of processing, probably autodegrades.

Its activity is regulated as follows. Protease activity is inhibited by PMSF, suggesting this is a serine protease. Its function is as follows. Controls heterocyst differentiation. Dimerization is required for DNA-binding. Has both a protease and a DNA-binding activity. Functionally, controls heterocyst differentiation; increased expression leads to more heterocysts than usual. Has protease activity. Binds the promoter regions of hetR, hepA and patS and is required for their expression. Dimerization is required for DNA-binding, DNA-binding is inhibited by the PatS6 peptide. Binds the inverted repeat 5'-GTAGGCGAGGGGTCTAACCCCTCATTACC-3' found in the hetP promoter, required for expression of hetP. This is DNA-binding transcriptional activator HetR from Nostoc sp. (strain PCC 7120 / SAG 25.82 / UTEX 2576).